The chain runs to 450 residues: CD209 antigen (450 aa).

Topologically, residues 1–37 are cytoplasmic; it reads MSDSKEPSVQQLGLLEEEQLRGLGFRQTRGYKSLAGC. 3 consecutive short sequence motifs (endocytosis signal) follow at residues 14-15, 16-18, and 31-34; these read LL, EEE, and YKSL. A helical; Signal-anchor for type II membrane protein membrane pass occupies residues 38–58; sequence LGHGALVLQLLSFTLLAGLLI. Residues 59–450 lie on the Extracellular side of the membrane; sequence QVSKFPSSIS…APATPNPPPV (392 aa). Asn-80 carries N-linked (GlcNAc...) asparagine glycosylation. 9 consecutive repeat copies span residues 96–118, 119–141, 142–164, 165–187, 188–210, 211–233, 234–256, 257–279, and 280–303. The interval 96 to 303 is 9 X approximate tandem repeats; it reads KLQEIYQELT…AVERLCRPCP (208 aa). 3 disulfide bridges follow: Cys-302/Cys-313, Cys-330/Cys-423, and Cys-402/Cys-415. In terms of domain architecture, C-type lectin spans 309 to 424; the sequence is FQGNCYFMSN…CNLAKFWICK (116 aa). Glu-393, Asn-395, Val-397, Glu-400, Asn-411, and Asp-412 together coordinate Ca(2+).

As to quaternary structure, homotetramer. Interacts with C1QBP; the interaction is indicative for a C1q:C1QBP:CD209 signaling complex. Interacts with ICAM2 and ICAM3 by binding to mannose-like carbohydrates. Interacts (via C-type lectin domain) with CEACAM1 (via Lewis X moieties); this interaction is regulated by the glycosylation pattern of CEACAM1 on cell types and regulates contact between dendritic cells and neutrophils.

It is found in the membrane. Its function is as follows. Pathogen-recognition receptor expressed on the surface of immature dendritic cells (DCs) and involved in initiation of primary immune response. Thought to mediate the endocytosis of pathogens which are subsequently degraded in lysosomal compartments. The receptor returns to the cell membrane surface and the pathogen-derived antigens are presented to resting T-cells via MHC class II proteins to initiate the adaptive immune response. Probably recognizes in a calcium-dependent manner high mannose N-linked oligosaccharides in a variety of pathogen antigens. In terms of biological role, on DCs it is a high affinity receptor for ICAM2 and ICAM3 by binding to mannose-like carbohydrates. May act as a DC rolling receptor that mediates transendothelial migration of DC presursors from blood to tissues by binding endothelial ICAM2. Seems to regulate DC-induced T-cell proliferation by binding to ICAM3 on T-cells in the immunological synapse formed between DC and T-cells. This Hylobates lar (Lar gibbon) protein is CD209 antigen (CD209).